A 422-amino-acid polypeptide reads, in one-letter code: DNA (cytosine-5)-methyltransferase 3-like (422 aa).

The span at 1–11 (MGSRETPSSCS) shows a compositional bias: polar residues. The interval 1-50 (MGSRETPSSCSKTHETLNLETPESSSTDPDSPLEEQWPKSAPDLKEEDSM) is disordered. A compositionally biased stretch (low complexity) spans 20–30 (ETPESSSTDPD). The ADD domain occupies 76–208 (EVNVNQRNIE…LKAFHDREGA (133 aa)). A GATA-type; atypical zinc finger spans residues 87-117 (ICLCCGSLQVYAQHPLFEGGICAPCKDKFLE). The segment at 128-184 (QSYCTICCSGHTLFICESPDCTRCYCFECVDILVGPGTSERINAMACWVCFLCLPFS) adopts a PHD-type; atypical zinc-finger fold.

As to quaternary structure, homodimer. Heterotetramer composed of 1 DNMT3A homodimer and 2 DNMT3L subunits (DNMT3L-DNMT3A-DNMT3A-DNMT3L). Interacts with histone H3 (via N-terminus); interaction is strongly inhibited by methylation at lysine 4 (H3K4me). Interacts with EZH2; the interaction is direct. Interacts with SPOCD1.

It localises to the nucleus. In terms of biological role, catalytically inactive regulatory factor of DNA methyltransferases that can either promote or inhibit DNA methylation depending on the context. Essential for the function of DNMT3A and DNMT3B: activates DNMT3A and DNMT3B by binding to their catalytic domain. Acts by accelerating the binding of DNA and S-adenosyl-L-methionine (AdoMet) to the methyltransferases and dissociates from the complex after DNA binding to the methyltransferases. Recognizes unmethylated histone H3 lysine 4 (H3K4me0) and induces de novo DNA methylation by recruitment or activation of DNMT3. Plays a key role in embryonic stem cells and germ cells. In germ cells, required for the methylation of imprinted loci together with DNMT3A. In male germ cells, specifically required to methylate retrotransposons, preventing their mobilization. Plays a key role in embryonic stem cells (ESCs) by acting both as an positive and negative regulator of DNA methylation. While it promotes DNA methylation of housekeeping genes together with DNMT3A and DNMT3B, it also acts as an inhibitor of DNA methylation at the promoter of bivalent genes. Interacts with the EZH2 component of the PRC2/EED-EZH2 complex, preventing interaction of DNMT3A and DNMT3B with the PRC2/EED-EZH2 complex, leading to maintain low methylation levels at the promoters of bivalent genes. Promotes differentiation of ESCs into primordial germ cells by inhibiting DNA methylation at the promoter of RHOX5, thereby activating its expression. The chain is DNA (cytosine-5)-methyltransferase 3-like (Dnmt3l) from Rattus norvegicus (Rat).